Consider the following 189-residue polypeptide: Lumazine protein (189 aa).

Lumazine-binding repeat units follow at residues 1 to 96 and 97 to 189; these read MFKG…LGKG and ALTG…SNEW.

It depends on 6,7-dimethyl-8-(1-D-ribityl)lumazine as a cofactor.

Antenna protein that modulates the color of the bioluminescence emission of the luciferase. In the presence of LumP, luciferase emission is shifted to higher energy values (shorter wavelength). The sequence is that of Lumazine protein (luxL) from Photobacterium phosphoreum.